Here is a 490-residue protein sequence, read N- to C-terminus: NAI2-like protein (490 aa).

An N-terminal signal peptide occupies residues 1 to 24 (MGRKYVVLGLAVCLFLSSFNEVSC). Disordered stretches follow at residues 43–83 (EEGE…VDKF) and 155–206 (AATN…FNKG). Residues 136-163 (IADERRQRLEDIERKLKAAAATNIVVED) are a coiled coil. The span at 171–183 (KVEETQEVVKFES) shows a compositional bias: basic and acidic residues. Residues 184–199 (ESSSASSESRRQSSSS) are compositionally biased toward low complexity. Positions 433–465 (TFEKTVANLSRVIEEASQAYEEYHVVVRKWKEE) form a coiled coil.

The polypeptide is NAI2-like protein (Arabidopsis thaliana (Mouse-ear cress)).